Reading from the N-terminus, the 349-residue chain is Magnesium-protoporphyrin IX monomethyl ester [oxidative] cyclase (349 aa).

Residues 1 to 10 (MTATTATAPA) are compositionally biased toward low complexity. The interval 1-23 (MTATTATAPAMRGGGRNELPPHL) is disordered.

Belongs to the AcsF family. It depends on Fe cation as a cofactor.

It carries out the reaction Mg-protoporphyrin IX 13-monomethyl ester + 3 NADPH + 3 O2 + 2 H(+) = 3,8-divinyl protochlorophyllide a + 3 NADP(+) + 5 H2O. It functions in the pathway porphyrin-containing compound metabolism; chlorophyll biosynthesis (light-independent). Functionally, catalyzes the formation of the isocyclic ring in chlorophyll biosynthesis. Mediates the cyclase reaction, which results in the formation of divinylprotochlorophyllide (Pchlide) characteristic of all chlorophylls from magnesium-protoporphyrin IX 13-monomethyl ester (MgPMME). The sequence is that of Magnesium-protoporphyrin IX monomethyl ester [oxidative] cyclase from Prochlorococcus marinus (strain MIT 9303).